A 325-amino-acid chain; its full sequence is uncharacterized protein (325 aa).

The HD domain maps to 49-151; the sequence is RYEHSIGVML…ELCADRTDYT (103 aa).

This is an uncharacterized protein from Bacillus subtilis (strain 168).